We begin with the raw amino-acid sequence, 573 residues long: MAVPVIETNNIISHPEGGCPLQVGEGTYHLKDNLHLATPPPHPSEAPIVNPNPLATVPTPPTMGVKLSLICISPRTKTPSSLPNQTVVAPPFGDGNPALAPVPVKDGLKRRKPKNNIIKSSSSFVSRVITHEAATKRLNDRSPEGLFAFANINRAFQWLDLSSKQKEEPLTKILFTKAHMLCHDTNELTKSSSHIDIVMGSSAGDIIWYEPMSQKYARINKNGVVSNSPVTHIKWIPGSENLFMAAHANGQLAVYDKEKEDALFTPEIQNQSAEALKASGRQPLQVLKSVNSRNQKTNPVALWKLANQRISHFAFSPDQRHLAVVLEDGSLRVMDYLKEEVLDIFRSYYGGLICVCWSPDGKYIVTGGQDDLLTIWSLPERKIVARCQGHNSWVSAVAFDPWRCDERTYRFGSVGDDCRLLLWDFSVGMLHRPKVYQASARQRTSMITSNTQYGNRHRADSASNRMRSDSQKTANTYESCDQAVRHPVEPRARTALLPPIMSKVVGSDPICWLGFQEDCIMTSSLEGHIRTWDRPREGISDKYNDQSSSPAISASATGSGSVSGLADSNTGLS.

4 WD repeats span residues 225-265 (VSNS…ALFT), 305-346 (LANQ…DIFR), 347-386 (SYYG…IVAR), and 389-433 (GHNS…LHRP). 2 disordered regions span residues 448 to 481 (TSNT…ESCD) and 537 to 573 (EGIS…TGLS). The segment covering 461–479 (SASNRMRSDSQKTANTYES) has biased composition (polar residues). Residues 505–542 (VGSDPICWLGFQEDCIMTSSLEGHIRTWDRPREGISDK) form a WD 5 repeat. Low complexity predominate over residues 547 to 564 (SSSPAISASATGSGSVSG).

Belongs to the WD repeat creC family. Interacts with creB.

In terms of biological role, component of the regulatory network controlling carbon source utilization through ubiquitination and deubiquitination involving creA, creB, creC, creD and acrB. Required to prevent the proteolysis of the CreB deubiquitinating enzyme in the absence of carbon catabolite repression. CreB deubiquitinating enzyme stabilized in a complex with the CreC leads to the expression of genes such as those in the proline and quinate pathways. In Aspergillus clavatus (strain ATCC 1007 / CBS 513.65 / DSM 816 / NCTC 3887 / NRRL 1 / QM 1276 / 107), this protein is Probable catabolite repression protein creC (creC).